A 486-amino-acid chain; its full sequence is Putative ankyrin repeat protein R634 (486 aa).

ANK repeat units lie at residues 84–113 (DLFK…NVRE), 114–143 (HNDV…DLYA), 145–173 (KNTL…NFRE), 174–203 (NCDT…DVNS), 205–233 (SHKS…NIDW), 234–263 (RHNY…NLEI), 265–293 (DGCI…EIGF), 307–336 (NKIT…ATIK), 337–366 (EKNY…SLEK), 367–396 (KINK…NVKT), 398–426 (EGLP…DVTS), and 427–456 (YDNY…NVND).

The sequence is that of Putative ankyrin repeat protein R634 from Acanthamoeba polyphaga (Amoeba).